The following is a 703-amino-acid chain: DNA ligase (703 aa).

NAD(+) is bound by residues 44–48 (DAEYD), 93–94 (SL), and Glu127. The N6-AMP-lysine intermediate role is filled by Lys129. The NAD(+) site is built by Arg150, Glu186, Lys302, and Lys326. Residues Cys420, Cys422, Cys444, and Cys450 each contribute to the Zn(2+) site. The region spanning 625 to 703 (VADSPVAGKT…EDMWFQRIGA (79 aa)) is the BRCT domain.

Belongs to the NAD-dependent DNA ligase family. LigA subfamily. Mg(2+) serves as cofactor. It depends on Mn(2+) as a cofactor.

It carries out the reaction NAD(+) + (deoxyribonucleotide)n-3'-hydroxyl + 5'-phospho-(deoxyribonucleotide)m = (deoxyribonucleotide)n+m + AMP + beta-nicotinamide D-nucleotide.. DNA ligase that catalyzes the formation of phosphodiester linkages between 5'-phosphoryl and 3'-hydroxyl groups in double-stranded DNA using NAD as a coenzyme and as the energy source for the reaction. It is essential for DNA replication and repair of damaged DNA. The sequence is that of DNA ligase from Chelativorans sp. (strain BNC1).